Consider the following 114-residue polypeptide: FK506-binding protein 1 (114 aa).

Position 2 is an N-acetylserine (Ser-2). In terms of domain architecture, PPIase FKBP-type spans 26-114 (GDLVTIHYTG…VFDVELLKVN (89 aa)). Phosphoserine is present on Ser-51.

The protein belongs to the FKBP-type PPIase family. FKBP1 subfamily. In terms of assembly, interacts with HOM3; the interaction is direct, plays a role in feedback inhibition of aspartokinase by threonine, and is inhibited by tacrolimus and sirolimus. Interacts with HMO1. Interacts with FAP1.

Its subcellular location is the cytoplasm. The protein resides in the mitochondrion. It carries out the reaction [protein]-peptidylproline (omega=180) = [protein]-peptidylproline (omega=0). Its function is as follows. PPIases accelerate the folding of proteins. It catalyzes the cis-trans isomerization of proline imidic peptide bonds in oligopeptides. Plays a role in feedback inhibition of the pathway synthesizing the aspartate family of amino acids by binding to aspartokinase. This Saccharomyces cerevisiae (strain ATCC 204508 / S288c) (Baker's yeast) protein is FK506-binding protein 1 (FPR1).